The chain runs to 145 residues: Neuropeptide-like protein 68 (145 aa).

The signal sequence occupies residues 1–15 (MLLVLLFSLFSVGFG). The tract at residues 41-65 (SSSSEDDTPDFPSLRDKRGVDPMSI) is disordered.

It is found in the secreted. The protein is Neuropeptide-like protein 68 of Caenorhabditis elegans.